Here is an 808-residue protein sequence, read N- to C-terminus: Phosphoinositide phosphatase SAC2 (808 aa).

The region spanning 158 to 551 is the SAC domain; it reads LCTVDLTKDF…GDTLALQYGG (394 aa). The disordered stretch occupies residues 429–476; that stretch reads FQNQNPSTLENDDGECSTYDPPSKDETAPNLVVENGNDSKDAKEDQQK. Basic and acidic residues predominate over residues 465-476; the sequence is NDSKDAKEDQQK. Positions 487 to 498 match the Phosphatase catalytic core motif; sequence RTNCIDCLDRTN.

In terms of assembly, component of the PI(3,5)P2 regulatory complex at least composed of ATG18, SAC/FIG4, FAB1 and VAC14. Mg(2+) is required as a cofactor. Ubiquitous with a higher level of expression in young seedlings than in other tissues.

It is found in the vacuole membrane. The catalysed reaction is a 1,2-diacyl-sn-glycero-3-phospho-(1D-myo-inositol-3,5-bisphosphate) + H2O = a 1,2-diacyl-sn-glycero-3-phospho-(1D-myo-inositol-3-phosphate) + phosphate. Its function is as follows. The PI(3,5)P2 regulatory complex regulates both the synthesis and turnover of phosphatidylinositol 3,5-bisphosphate (PtdIns(3,5)P2). This chain is Phosphoinositide phosphatase SAC2 (SAC2), found in Arabidopsis thaliana (Mouse-ear cress).